The following is a 201-amino-acid chain: Histidinol dehydrogenase (201 aa).

This sequence belongs to the histidinol dehydrogenase family. Homodimer. It depends on Zn(2+) as a cofactor.

The catalysed reaction is L-histidinol + 2 NAD(+) + H2O = L-histidine + 2 NADH + 3 H(+). It participates in amino-acid biosynthesis; L-histidine biosynthesis; L-histidine from 5-phospho-alpha-D-ribose 1-diphosphate: step 9/9. Its function is as follows. Catalyzes the sequential NAD-dependent oxidations of L-histidinol to L-histidinaldehyde and then to L-histidine. This Buchnera aphidicola subsp. Melaphis rhois protein is Histidinol dehydrogenase (hisD).